A 232-amino-acid polypeptide reads, in one-letter code: LexA repressor (232 aa).

Polar residues predominate over residues 1–10; it reads MDDSNDSSSA. A disordered region spans residues 1–22; that stretch reads MDDSNDSSSAGPDGRLHAVDPS. Residues 47–67 constitute a DNA-binding region (H-T-H motif); that stretch reads IREIGDAVGLTSTSSVAHQLR. Catalysis depends on for autocatalytic cleavage activity residues S156 and K193.

Belongs to the peptidase S24 family. Homodimer.

It carries out the reaction Hydrolysis of Ala-|-Gly bond in repressor LexA.. Its function is as follows. Represses a number of genes involved in the response to DNA damage (SOS response), including recA and lexA. In the presence of single-stranded DNA, RecA interacts with LexA causing an autocatalytic cleavage which disrupts the DNA-binding part of LexA, leading to derepression of the SOS regulon and eventually DNA repair. In Mycolicibacterium paratuberculosis (strain ATCC BAA-968 / K-10) (Mycobacterium paratuberculosis), this protein is LexA repressor.